Consider the following 259-residue polypeptide: 14-3-3-like protein (259 aa).

Belongs to the 14-3-3 family.

The sequence is that of 14-3-3-like protein from Helianthus annuus (Common sunflower).